Consider the following 962-residue polypeptide: RNA-binding protein 15 (962 aa).

Composition is skewed to basic and acidic residues over residues 1-10 (MRSAGREPLP), 34-52 (LRRDDLRRPSTMKGKERSP), and 59-72 (RGGEDSSSRGERSK). The tract at residues 1–167 (MRSAGREPLP…SAPGGGDGVE (167 aa)) is disordered. A compositionally biased stretch (low complexity) spans 82–94 (GSSSGKTDSGGSR). Residues 97–112 (LHLDKSSSRGGSREYE) show a composition bias toward basic and acidic residues. At Ser-108 the chain carries Phosphoserine. Low complexity predominate over residues 118 to 129 (SSSRLHSYSSPS). Residues 134–149 (SGGGESRSSSRGGGGE) show a composition bias toward gly residues. Low complexity predominate over residues 150 to 159 (SRSSGAASSA). The 83-residue stretch at 169–251 (KTLKISELGS…RPLKIEAVYV (83 aa)) folds into the RRM 1 domain. A phosphoserine mark is found at Ser-178, Ser-207, and Ser-209. Residue Lys-245 forms a Glycyl lysine isopeptide (Lys-Gly) (interchain with G-Cter in SUMO2) linkage. Ser-252, Ser-256, and Ser-258 each carry phosphoserine. Residues 257 to 297 (RSPLDKDAYAPSSSVVGTSVGSHRHAPGGGGGQRSLSPGGA) are disordered. Tyr-265 is subject to Phosphotyrosine. The segment covering 268–277 (SSSVVGTSVG) has biased composition (low complexity). Residues Ser-291, Ser-293, and Ser-364 each carry the phosphoserine modification. RRM domains are found at residues 373 to 450 (RTLF…YGKA) and 454 to 528 (TRLW…FADT). Glycyl lysine isopeptide (Lys-Gly) (interchain with G-Cter in SUMO2) cross-links involve residues Lys-405, Lys-419, and Lys-444. An N6-acetyllysine modification is found at Lys-449. 2 stretches are compositionally biased toward basic and acidic residues: residues 553 to 580 (GHRAPDPLRSARDRTPPLLYRDRDRDLY) and 612 to 661 (SLDR…SERP). Residues 553–779 (GHRAPDPLRS…KQDGGTAPVA (227 aa)) are disordered. Thr-567 is subject to Phosphothreonine. Position 577 is an asymmetric dimethylarginine; alternate; by PRMT1 (Arg-577). Arg-577 is modified (omega-N-methylarginine; alternate; by PRMT1). A phosphoserine mark is found at Ser-621, Ser-655, Ser-670, Ser-674, and Ser-701. 3 stretches are compositionally biased toward basic and acidic residues: residues 673-692 (RSPELSSNRDRYNSDNDRSS), 701-729 (SPVRDRRGSLEKSQSDKRDRKNSASAERD), and 742-751 (NPLKKEDRSD). Residue Lys-745 forms a Glycyl lysine isopeptide (Lys-Gly) (interchain with G-Cter in SUMO2) linkage. The span at 754–771 (APSASTSSSKQKPPSQKQ) shows a compositional bias: low complexity. 2 positions are modified to phosphoserine: Ser-768 and Ser-782. Residues 778–957 (VAASSPKLCL…YLVMIIVRAK (180 aa)) form the SPOC domain. The segment at 866–885 (GSSDSRSSSSSATSDTAAST) is disordered. Residues 867–885 (SSDSRSSSSSATSDTAAST) are compositionally biased toward low complexity. A Phosphoserine modification is found at Ser-936.

Belongs to the RRM Spen family. As to quaternary structure, component of the WMM complex, a N6-methyltransferase complex composed of a catalytic subcomplex, named MAC, and of an associated subcomplex, named MACOM. The MAC subcomplex is composed of METTL3 and METTL14. The MACOM subcomplex is composed of WTAP, ZC3H13, CBLL1/HAKAI, VIRMA, and, in some cases of RBM15 (RBM15 or RBM15B). Also a component of a MACOM-like complex, named WTAP complex, composed of WTAP, ZC3H13, CBLL1, VIRMA, RBM15, BCLAF1 and THRAP3. Interacts with RBPJ. Interacts (via SPOC domain) with SETD1B. Interacts with NXF1, the interaction is required to promote mRNA export. Interacts with SF3B1. Post-translationally, methylated at Arg-577 by PRMT1, leading to promote ubiquitination by CNOT4 and subsequent degradation by the proteasome. Ubiquitinated by CNOT4 following methylation at Arg-577 by PRMT1.

Its subcellular location is the nucleus speckle. The protein localises to the nucleus. The protein resides in the nucleoplasm. It is found in the nucleus envelope. It localises to the nucleus membrane. In terms of biological role, RNA-binding protein that acts as a key regulator of N6-methyladenosine (m6A) methylation of RNAs, thereby regulating different processes, such as hematopoietic cell homeostasis, alternative splicing of mRNAs and X chromosome inactivation mediated by Xist RNA. Associated component of the WMM complex, a complex that mediates N6-methyladenosine (m6A) methylation of RNAs, a modification that plays a role in the efficiency of mRNA splicing and RNA processing. Plays a key role in m6A methylation, possibly by binding target RNAs and recruiting the WMM complex. Involved in random X inactivation mediated by Xist RNA: acts by binding Xist RNA and recruiting the WMM complex, which mediates m6A methylation, leading to target YTHDC1 reader on Xist RNA and promoting transcription repression activity of Xist. Required for the development of multiple tissues, such as the maintenance of the homeostasis of long-term hematopoietic stem cells and for megakaryocyte (MK) and B-cell differentiation. Regulates megakaryocyte differentiation by regulating alternative splicing of genes important for megakaryocyte differentiation; probably regulates alternative splicing via m6A regulation. Required for placental vascular branching morphogenesis and embryonic development of the heart and spleen. Acts as a regulator of thrombopoietin response in hematopoietic stem cells by regulating alternative splicing of MPL. May also function as an mRNA export factor, stimulating export and expression of RTE-containing mRNAs which are present in many retrotransposons that require to be exported prior to splicing. High affinity binding of pre-mRNA to RBM15 may allow targeting of the mRNP to the export helicase DBP5 in a manner that is independent of splicing-mediated NXF1 deposition, resulting in export prior to splicing. May be implicated in HOX gene regulation. The polypeptide is RNA-binding protein 15 (Mus musculus (Mouse)).